Here is a 503-residue protein sequence, read N- to C-terminus: Na(+)-translocating NADH-quinone reductase subunit B (503 aa).

5 helical membrane passes run 55-75 (MMLVVIALMPTVFVAIWNSGL), 85-105 (PQIMEAFLHISGFTSYFSFVS), 120-142 (IFLPLLFISYAVGGTCEVLFAII), 161-181 (ILPPTIPYWMAALGIAFGVVI), and 186-206 (FGGTGMNILNPALTGRAFLFF). An FMN phosphoryl threonine modification is found at Thr-248. 5 helical membrane passes run 361–381 (TSTVACLLGAGLLLLTGIASW), 387–407 (FGLSSLFFAWLFKIISILAAG), 417–437 (FFIPVYRHLFIGGLAFGLVFM), 452–472 (WFYGAFIGFLTILIRLINPAY), and 475–495 (GVMLAILLGNVFAPSFDRIAL).

Belongs to the NqrB/RnfD family. In terms of assembly, composed of six subunits; NqrA, NqrB, NqrC, NqrD, NqrE and NqrF. Requires FMN as cofactor.

It is found in the cell inner membrane. It carries out the reaction a ubiquinone + n Na(+)(in) + NADH + H(+) = a ubiquinol + n Na(+)(out) + NAD(+). In terms of biological role, NQR complex catalyzes the reduction of ubiquinone-1 to ubiquinol by two successive reactions, coupled with the transport of Na(+) ions from the cytoplasm to the periplasm. NqrA to NqrE are probably involved in the second step, the conversion of ubisemiquinone to ubiquinol. The protein is Na(+)-translocating NADH-quinone reductase subunit B of Chlamydia muridarum (strain MoPn / Nigg).